The following is a 636-amino-acid chain: Fructose-1,6-bisphosphatase class 3 (636 aa).

The protein belongs to the FBPase class 3 family. Mn(2+) is required as a cofactor.

The catalysed reaction is beta-D-fructose 1,6-bisphosphate + H2O = beta-D-fructose 6-phosphate + phosphate. It participates in carbohydrate biosynthesis; gluconeogenesis. In Streptococcus gordonii (strain Challis / ATCC 35105 / BCRC 15272 / CH1 / DL1 / V288), this protein is Fructose-1,6-bisphosphatase class 3.